A 1169-amino-acid chain; its full sequence is Protein qua-1 (1169 aa).

An N-terminal signal peptide occupies residues 1–22 (MRRLSAILPILLLSNFWPTVES). Disordered stretches follow at residues 261–338 (GATG…AGTN) and 368–933 (AGGV…RTSS). Over residues 278 to 292 (ESNGNNNNSFEGGRS) the composition is skewed to low complexity. Gly residues predominate over residues 312–337 (GAGGKGGAGADGAAGSGAGAGAGAGT). Composition is skewed to acidic residues over residues 426–437 (DEEDEEDNGDED) and 453–464 (DDGDGDEDDDGT). Over residues 511 to 523 (SPDDNDLLEKDEN) the composition is skewed to basic and acidic residues. Composition is skewed to gly residues over residues 526–536 (NGKGGAGNGNG), 545–572 (KGNGTGDGDGDGNGNGNGLTGDGNGTGD), 605–634 (DGNGNGTGDGNGDGNDNGNGSKGLGTGSGD), 656–700 (GSNG…GGTG), and 727–752 (NAEGNGKGNGNDGKGSGSGDGSGAGG). A compositionally biased stretch (basic and acidic residues) spans 753–774 (KGDKSDSESGNEADGKDGKKNE). The span at 775-791 (GAGGEAAAGSGGANKGG) shows a compositional bias: gly residues. The span at 793 to 803 (DGDDDDVDVTD) shows a compositional bias: acidic residues. Polar residues predominate over residues 840 to 855 (GTVQTGAKHNAESSAS). The segment covering 889-906 (SGTSESVTNGSGATESGS) has biased composition (low complexity). Over residues 907–923 (TGSGTTGTGTSGTGSSG) the composition is skewed to gly residues. Low complexity predominate over residues 924-933 (TGASAARTSS).

Transiently expressed in head cells.

The protein resides in the cytoplasmic vesicle. It is found in the secreted. Its subcellular location is the extracellular space. It localises to the extracellular matrix. Its function is as follows. Required for cuticle shedding and normal alae morphology and localization, and subsequently larval development. In Caenorhabditis elegans, this protein is Protein qua-1.